We begin with the raw amino-acid sequence, 490 residues long: Glutamate--tRNA ligase (490 aa).

Positions 13 to 23 (PSPTGTPHVGL) match the 'HIGH' region motif. The short motif at 257–261 (KLSKR) is the 'KMSKS' region element. Position 260 (Lys-260) interacts with ATP.

This sequence belongs to the class-I aminoacyl-tRNA synthetase family. Glutamate--tRNA ligase type 1 subfamily. Monomer.

Its subcellular location is the cytoplasm. The catalysed reaction is tRNA(Glu) + L-glutamate + ATP = L-glutamyl-tRNA(Glu) + AMP + diphosphate. Catalyzes the attachment of glutamate to tRNA(Glu) in a two-step reaction: glutamate is first activated by ATP to form Glu-AMP and then transferred to the acceptor end of tRNA(Glu). This is Glutamate--tRNA ligase from Mycobacterium bovis (strain BCG / Pasteur 1173P2).